A 461-amino-acid polypeptide reads, in one-letter code: Threonine/serine transporter ThrP (461 aa).

The next 12 helical transmembrane spans lie at 17-37 (IELIALGGTIGVGLFMGAAST), 40-60 (WAGPSVLLAYIIAGLFVFFIM), 97-117 (WFMWMAVGISEITAIGVYVQF), 123-143 (AQWIPALIAVGLVALANLAAV), 156-176 (IKVTTIIVMIIIGLGVIFFGF), 201-221 (GFLTALCIVVASYQGVELIGI), 244-264 (ILIFYVGAIFVIVTIFPWNEI), 278-298 (IGITAAAGIINFVVLTAALSG), 333-353 (VAGVALSILILLVGSCLNYII), 360-380 (FVYVYSASVLPGMVPWFVILI), 401-421 (IMFPWANYLTMAFLVCVLIGM), and 430-450 (SLFVGVIFLLAVTLVYKVFGL).

Belongs to the amino acid-polyamine-organocation (APC) superfamily.

The protein localises to the cell inner membrane. The catalysed reaction is L-threonine(in) + H(+)(in) = L-threonine(out) + H(+)(out). The enzyme catalyses L-serine(in) + H(+)(in) = L-serine(out) + H(+)(out). Its function is as follows. Permease that mediates the proton-dependent threonine and serine uptake. This chain is Threonine/serine transporter ThrP, found in Salmonella typhi.